The sequence spans 97 residues: Mitochondrial import inner membrane translocase subunit Tim8 A (97 aa).

Residues 43–66 carry the Twin CX3C motif motif; it reads CWEKCMDKPGPKLDSRAEACFVNC. 2 cysteine pairs are disulfide-bonded: Cys-43-Cys-66 and Cys-47-Cys-62. A phosphoserine mark is found at Ser-57, Ser-87, Ser-94, and Ser-96.

It belongs to the small Tim family. In terms of assembly, heterohexamer; composed of 3 copies of TIMM8A and 3 copies of TIMM13, named soluble 70 kDa complex. Associates with the TIM22 complex, whose core is composed of TIMM22.

It localises to the mitochondrion inner membrane. Functionally, mitochondrial intermembrane chaperone that participates in the import and insertion of some multi-pass transmembrane proteins into the mitochondrial inner membrane. Also required for the transfer of beta-barrel precursors from the TOM complex to the sorting and assembly machinery (SAM complex) of the outer membrane. Acts as a chaperone-like protein that protects the hydrophobic precursors from aggregation and guide them through the mitochondrial intermembrane space. The TIMM8-TIMM13 complex mediates the import of proteins such as TIMM23, SLC25A12/ARALAR1 and SLC25A13/ARALAR2, while the predominant TIMM9-TIMM10 70 kDa complex mediates the import of much more proteins. The sequence is that of Mitochondrial import inner membrane translocase subunit Tim8 A (Timm8a) from Rattus norvegicus (Rat).